A 356-amino-acid polypeptide reads, in one-letter code: Hyaluronan and proteoglycan link protein 1 (356 aa).

Positions 1-9 (MRSLLLLVL) are excised as a propeptide. The Ig-like V-type domain maps to 40 to 154 (PRLLVEAEQA…EGLEDDTAVV (115 aa)). Asn58 carries N-linked (GlcNAc...) asparagine glycosylation. 5 cysteine pairs are disulfide-bonded: Cys63–Cys141, Cys183–Cys254, Cys207–Cys228, Cys281–Cys351, and Cys306–Cys327. Link domains are found at residues 161-256 (VVFP…FCFT) and 261-353 (GRFY…YCFR).

Belongs to the HAPLN family. As to expression, ubiquitously expressed.

The protein resides in the secreted. Its subcellular location is the extracellular space. It localises to the extracellular matrix. In terms of biological role, stabilizes the aggregates of proteoglycan monomers with hyaluronic acid in the extracellular cartilage matrix. The polypeptide is Hyaluronan and proteoglycan link protein 1 (Hapln1) (Mus musculus (Mouse)).